A 304-amino-acid chain; its full sequence is Protoheme IX farnesyltransferase 1 (304 aa).

The next 8 helical transmembrane spans lie at 24-44 (VVVLMLITSLIGMLLATKAPL), 47-67 (FVPWQVLIFGNLGIGLCAGAA), 99-119 (MALGFALLLALAGMAVLLAFT), 122-142 (LTAWLTLASLLGYAALYTGFL), 150-170 (IVIGGLAGAAPPLLGWVAITG), 176-196 (PLLLVLIIFAWTPPHFWALCI), 228-248 (LVLFAVSLMPFVIHMSGLVYL), and 280-300 (YSIVYLFLLFMALLVDHYLPL).

This sequence belongs to the UbiA prenyltransferase family. Protoheme IX farnesyltransferase subfamily.

It localises to the cell inner membrane. The enzyme catalyses heme b + (2E,6E)-farnesyl diphosphate + H2O = Fe(II)-heme o + diphosphate. The protein operates within porphyrin-containing compound metabolism; heme O biosynthesis; heme O from protoheme: step 1/1. In terms of biological role, converts heme B (protoheme IX) to heme O by substitution of the vinyl group on carbon 2 of heme B porphyrin ring with a hydroxyethyl farnesyl side group. This is Protoheme IX farnesyltransferase 1 from Pseudomonas paraeruginosa (strain DSM 24068 / PA7) (Pseudomonas aeruginosa (strain PA7)).